The sequence spans 223 residues: Endonuclease V (223 aa).

Mg(2+) is bound by residues D45 and D113.

Belongs to the endonuclease V family. It depends on Mg(2+) as a cofactor.

It is found in the cytoplasm. It catalyses the reaction Endonucleolytic cleavage at apurinic or apyrimidinic sites to products with a 5'-phosphate.. Its function is as follows. DNA repair enzyme involved in the repair of deaminated bases. Selectively cleaves double-stranded DNA at the second phosphodiester bond 3' to a deoxyinosine leaving behind the intact lesion on the nicked DNA. In Dehalococcoides mccartyi (strain CBDB1), this protein is Endonuclease V.